A 137-amino-acid polypeptide reads, in one-letter code: Large ribosomal subunit protein uL16 (137 aa).

It belongs to the universal ribosomal protein uL16 family. As to quaternary structure, part of the 50S ribosomal subunit.

Binds 23S rRNA and is also seen to make contacts with the A and possibly P site tRNAs. The protein is Large ribosomal subunit protein uL16 of Rhodopseudomonas palustris (strain ATCC BAA-98 / CGA009).